The sequence spans 132 residues: Small ribosomal subunit protein uS8c (132 aa).

The protein belongs to the universal ribosomal protein uS8 family. In terms of assembly, part of the 30S ribosomal subunit.

The protein resides in the plastid. Its subcellular location is the chloroplast. Functionally, one of the primary rRNA binding proteins, it binds directly to 16S rRNA central domain where it helps coordinate assembly of the platform of the 30S subunit. The chain is Small ribosomal subunit protein uS8c (rps8) from Zygnema circumcarinatum (Green alga).